The sequence spans 147 residues: Calcium-regulated heat-stable protein 1 (147 aa).

The span at 1-12 shows a compositional bias: pro residues; it reads MSSEPPPPPQPP. The tract at residues 1-52 is disordered; the sequence is MSSEPPPPPQPPTHQASVGLLDTPRSRERSPSPLRGNVVPSPLPTRRTRTFS. The residue at position 2 (Ser2) is an N-acetylserine. Phosphoserine occurs at positions 30, 32, and 41. The residue at position 45 (Thr45) is a Phosphothreonine. Residues Ser52 and Ser58 each carry the phosphoserine modification. In terms of domain architecture, CSD spans 62–129; sequence VYKGVCKCFC…KLQAVEVVIT (68 aa). 2 positions are modified to phosphoserine: Ser146 and Ser147.

As to quaternary structure, homodimer. Interacts with STYX. Dephosphorylated by calcineurin in a Ca(2+) dependent manner. Can be phosphorylated by DYRK2 (in vitro).

The protein resides in the cytoplasm. The protein localises to the P-body. It is found in the cytoplasmic granule. Binds mRNA and regulates the stability of target mRNA. Binds single-stranded DNA (in vitro). This chain is Calcium-regulated heat-stable protein 1 (CARHSP1), found in Homo sapiens (Human).